The chain runs to 313 residues: Biotin synthase (313 aa).

Residues 28 to 258 (NFGNDIELCS…LFPQARLRLS (231 aa)) enclose the Radical SAM core domain. Cysteine 46, cysteine 50, and cysteine 53 together coordinate [4Fe-4S] cluster. [2Fe-2S] cluster contacts are provided by cysteine 90, cysteine 121, cysteine 181, and arginine 256.

The protein belongs to the radical SAM superfamily. Biotin synthase family. As to quaternary structure, homodimer. [4Fe-4S] cluster is required as a cofactor. [2Fe-2S] cluster serves as cofactor.

It carries out the reaction (4R,5S)-dethiobiotin + (sulfur carrier)-SH + 2 reduced [2Fe-2S]-[ferredoxin] + 2 S-adenosyl-L-methionine = (sulfur carrier)-H + biotin + 2 5'-deoxyadenosine + 2 L-methionine + 2 oxidized [2Fe-2S]-[ferredoxin]. Its pathway is cofactor biosynthesis; biotin biosynthesis; biotin from 7,8-diaminononanoate: step 2/2. Functionally, catalyzes the conversion of dethiobiotin (DTB) to biotin by the insertion of a sulfur atom into dethiobiotin via a radical-based mechanism. The polypeptide is Biotin synthase (Francisella philomiragia subsp. philomiragia (strain ATCC 25017 / CCUG 19701 / FSC 153 / O#319-036)).